A 542-amino-acid polypeptide reads, in one-letter code: Endonuclease 4 homolog (542 aa).

Disordered stretches follow at residues 89–123 (NEEI…QTSI) and 141–234 (PFFS…ENKF). 2 stretches are compositionally biased toward low complexity: residues 99-115 (SKKL…QQSK) and 147-170 (NNAS…TTTT). A coiled-coil region spans residues 171 to 206 (TKKRNNKDEENEDDNEEEEEEEEEEEDKKSKKKTTT). The span at 179-196 (EENEDDNEEEEEEEEEEE) shows a compositional bias: acidic residues. The span at 205 to 215 (TTTTTTTTTTA) shows a compositional bias: low complexity. Basic residues predominate over residues 216–227 (YKKKSSPKKKKV). The Nuclear localization signal signature appears at 222 to 227 (PKKKKV). Zn(2+) is bound by residues H328, H368, E404, D438, H441, H475, D488, H490, and E520.

This sequence belongs to the AP endonuclease 2 family. It depends on Zn(2+) as a cofactor.

The protein resides in the nucleus. The catalysed reaction is Endonucleolytic cleavage to 5'-phosphooligonucleotide end-products.. Plays a role in DNA repair. It cleaves phosphodiester bonds at apurinic or apyrimidinic sites (AP sites) to produce new 5'-ends that are base-free deoxyribose 5-phosphate residues. The chain is Endonuclease 4 homolog (apnA) from Dictyostelium discoideum (Social amoeba).